Consider the following 630-residue polypeptide: MADIDSRLDTTQATPIGVTTGPIRGSRKIHVASPTGSGIRVAMREILLEPSSGEPPVRVYDTSGPYTDPDATIDIAQGLPELRASWIRARGDVEEVAQREVRPEDNGQLGPDRSGGVPAFPNVRKKVLRAKPGANVSQMHYARRGIITPEMEYVATRENLGRERLAEYVRDGQDWGASIPDYVTPEFVRDEVARGRAIIPSNINHPESEPMAIGRNFLVKINANIGNSAVASDVAAEVDKMVWSIRWGADTVMDLSTGRNIHDTREWILRNSPVPIGTVPIYQALEKVGGIAEELTWEIFRDTLIEQAEQGVDYFTIHAGVRLPYVPLAAKRVTGIVSRGGSIMAKWCLAHHRESFLYDHFDEITEIMKAYDIAYSLGDGLRPGSIADANDEAQFAELYTLGELTRRAWAQDVQVMIEGPGHVPMHKIKENMDKQLEACGEAPFYTLGPLTTDIAPGYDHITSGIGAAMIGWYGTAMLCYVTPKEHLGLPDRDDVKVGVVTYKLAAHAADLAKGHPAAQVRDDALSKARFEFRWRDQFNLSLDPDTAEQYHDQTLPAEGAKTAHFCSMCGPKFCSMKISQEVREFAKLQNQDSAGFIAAEEAEKGMAEMSQVYEDTGRELYMGAGGREHD.

2 disordered regions span residues 1–22 (MADIDSRLDTTQATPIGVTTGP) and 97–120 (AQREVRPEDNGQLGPDRSGGVPAF). Residues Asn-224, Met-253, Tyr-282, His-318, 338-340 (SRG), 379-382 (DGLR), and Glu-418 each bind substrate. His-422 provides a ligand contact to Zn(2+). Tyr-445 contacts substrate. His-486 is a Zn(2+) binding site. [4Fe-4S] cluster-binding residues include Cys-566, Cys-569, and Cys-574.

Belongs to the ThiC family. As to quaternary structure, homodimer. Requires [4Fe-4S] cluster as cofactor.

The catalysed reaction is 5-amino-1-(5-phospho-beta-D-ribosyl)imidazole + S-adenosyl-L-methionine = 4-amino-2-methyl-5-(phosphooxymethyl)pyrimidine + CO + 5'-deoxyadenosine + formate + L-methionine + 3 H(+). It functions in the pathway cofactor biosynthesis; thiamine diphosphate biosynthesis. Catalyzes the synthesis of the hydroxymethylpyrimidine phosphate (HMP-P) moiety of thiamine from aminoimidazole ribotide (AIR) in a radical S-adenosyl-L-methionine (SAM)-dependent reaction. This is Phosphomethylpyrimidine synthase from Sphingopyxis alaskensis (strain DSM 13593 / LMG 18877 / RB2256) (Sphingomonas alaskensis).